Reading from the N-terminus, the 425-residue chain is Interferon-activable protein 211 (425 aa).

Positions 1–88 (MVNEYKRIVL…AEILKKERSE (88 aa)) constitute a Pyrin domain. Residues 86–99 (RSEVTGETSLEKNG) are compositionally biased toward basic and acidic residues. The tract at residues 86 to 223 (RSEVTGETSL…QNQNIPRGAV (138 aa)) is disordered. Over residues 122–153 (TSATQEETSTAQAGTSTAQAGTSTAQAGTSTA) the composition is skewed to low complexity. 4 consecutive repeat copies span residues 129 to 135 (TSTAQAG), 136 to 142 (TSTAQAG), 143 to 149 (TSTAQAG), and 150 to 156 (TSTAQKR). Positions 129-177 (TSTAQAGTSTAQAGTSTAQAGTSTAQKRKSMREEETGVKKSKAAKEPDQ) are 4 X 7 AA tandem repeats of T-S-T-A-Q-A-[GR]. Residues 159–176 (MREEETGVKKSKAAKEPD) show a composition bias toward basic and acidic residues. A compositionally biased stretch (low complexity) spans 190–206 (SPILHSSSSASSNILSA). Over residues 207–218 (KNQKSQPQNQNI) the composition is skewed to polar residues. Positions 213–413 (PQNQNIPRGA…CGDHSFVKVT (201 aa)) constitute an HIN-200 domain.

This sequence belongs to the HIN-200 family. In terms of assembly, interacts with HOXB2. As to expression, mononuclear phagocytes.

The protein localises to the nucleus. In terms of biological role, inhibits cell growth via p53/TP53 and RB1-dependent and independent pathways. May work in synergy with TP53 to promote the transcription of CDKN1A/P21. This is Interferon-activable protein 211 from Mus musculus (Mouse).